Consider the following 133-residue polypeptide: Agouti-signaling protein (133 aa).

The signal sequence occupies residues 1-22; that stretch reads MDVIHLFLATLLVSLCFLTAYS. The span at 26 to 36 shows a compositional bias: basic and acidic residues; it reads PEEKPKDDRSL. The interval 26–83 is disordered; that stretch reads PEEKPKDDRSLRNNSSMNLLDSPSVSIMALNKKSKKISRKEAEKKKRSSKKKASMTKV. Positions 37–50 are enriched in polar residues; sequence RNNSSMNLLDSPSV. N-linked (GlcNAc...) asparagine glycans are attached at residues Asn38 and Asn39. Residues 70–79 are compositionally biased toward basic residues; that stretch reads KKRSSKKKAS. Disulfide bonds link Cys94/Cys109, Cys101/Cys115, Cys108/Cys126, Cys112/Cys133, and Cys117/Cys124. Positions 94-133 constitute an Agouti domain; sequence CVATRDSCKPPAPACCDPCASCQCRFFRSACSCRVLTRTC.

It is found in the secreted. Its function is as follows. Involved in the regulation of melanogenesis. The binding of ASP to MC1R precludes alpha-MSH initiated signaling and thus blocks production of cAMP, leading to a down-regulation of eumelanogenesis (brown/black pigment) and thus increasing synthesis of pheomelanin (yellow/red pigment). This is Agouti-signaling protein (ASIP) from Equus caballus (Horse).